Consider the following 244-residue polypeptide: 7-cyano-7-deazaguanine synthase (244 aa).

14–24 (FSGGQDSATCV) contacts ATP. Residues cysteine 202, cysteine 217, cysteine 220, and cysteine 223 each contribute to the Zn(2+) site.

It belongs to the QueC family. The cofactor is Zn(2+).

It carries out the reaction 7-carboxy-7-deazaguanine + NH4(+) + ATP = 7-cyano-7-deazaguanine + ADP + phosphate + H2O + H(+). Its pathway is purine metabolism; 7-cyano-7-deazaguanine biosynthesis. Functionally, catalyzes the ATP-dependent conversion of 7-carboxy-7-deazaguanine (CDG) to 7-cyano-7-deazaguanine (preQ(0)). This is 7-cyano-7-deazaguanine synthase from Burkholderia thailandensis (strain ATCC 700388 / DSM 13276 / CCUG 48851 / CIP 106301 / E264).